Here is a 154-residue protein sequence, read N- to C-terminus: Myoglobin (154 aa).

The Globin domain maps to 2–148; sequence GLSDDEWNHV…FRNDMASKYK (147 aa). His-65 is a binding site for nitrite. His-65 provides a ligand contact to O2. His-94 contributes to the heme b binding site.

It belongs to the globin family. As to quaternary structure, monomeric.

It localises to the cytoplasm. The protein localises to the sarcoplasm. It carries out the reaction Fe(III)-heme b-[protein] + nitric oxide + H2O = Fe(II)-heme b-[protein] + nitrite + 2 H(+). The enzyme catalyses H2O2 + AH2 = A + 2 H2O. Functionally, monomeric heme protein which primary function is to store oxygen and facilitate its diffusion within muscle tissues. Reversibly binds oxygen through a pentacoordinated heme iron and enables its timely and efficient release as needed during periods of heightened demand. Depending on the oxidative conditions of tissues and cells, and in addition to its ability to bind oxygen, it also has a nitrite reductase activity whereby it regulates the production of bioactive nitric oxide. Under stress conditions, like hypoxia and anoxia, it also protects cells against reactive oxygen species thanks to its pseudoperoxidase activity. This Caretta caretta (Loggerhead sea turtle) protein is Myoglobin (MB).